The chain runs to 437 residues: Nuclear distribution protein PAC1 (437 aa).

Residues 64–94 (LSVIRLQRKVMDLETRLEAAEREASSTHKAN) are a coiled coil. 7 WD repeats span residues 114–153 (LHKQ…IETT), 156–217 (AHTR…ANVK), 221–260 (GHDH…CVRT), 263–301 (GHTD…GKMT), 304–356 (GHEH…LLIL), 358–397 (GHDN…RCIR), and 401–437 (AHGH…KVWQ). Residues 165–186 (DFSQPDTGASRDKSHDKPRADV) form a disordered region. Over residues 173–186 (ASRDKSHDKPRADV) the composition is skewed to basic and acidic residues.

This sequence belongs to the WD repeat LIS1/nudF family. Self-associates. Interacts with NDL1 and dynein.

Its subcellular location is the cytoplasm. It localises to the cytoskeleton. The protein localises to the spindle pole. Positively regulates the activity of the minus-end directed microtubule motor protein dynein. Plays a central role in positioning the mitotic spindle at the bud neck during cell division. Targets cytoplasmic dynein to microtubule plus ends, thereby promoting dynein-mediated microtubule sliding along the bud cortex and consequently the movement of the mitotic spindle to the bud neck. The chain is Nuclear distribution protein PAC1 from Yarrowia lipolytica (strain CLIB 122 / E 150) (Yeast).